Here is a 577-residue protein sequence, read N- to C-terminus: Copine-8 (577 aa).

C2 domains follow at residues 19 to 146 (TSAT…RLEK) and 155 to 278 (KCGT…FNVY). Residues D52, D58, D112, D114, S117, K122, D124, D186, D192, D248, D250, and D256 each coordinate Ca(2+). At S273 the chain carries Phosphoserine. The region spanning 322-523 (NFTVAIDFTA…VQFVPFRDYI (202 aa)) is the VWFA domain.

It belongs to the copine family. Ca(2+) is required as a cofactor.

In terms of biological role, probable calcium-dependent phospholipid-binding protein that may play a role in calcium-mediated intracellular processes. This chain is Copine-8, found in Mus musculus (Mouse).